We begin with the raw amino-acid sequence, 929 residues long: Thrombospondin-3b (929 aa).

The N-terminal stretch at 1-22 (MELRKIVPNLLVLYVAVHFSQS) is a signal peptide. One can recognise a Laminin G-like domain in the interval 24-192 (EIKVINVLEL…VESVKLALGG (169 aa)). N-linked (GlcNAc...) asparagine glycosylation occurs at N45. 18 cysteine pairs are disulfide-bonded: C277/C288, C282/C299, C319/C343, C349/C362, C356/C371, C374/C386, C392/C406, C400/C416, C418/C429, C445/C452, C457/C477, C493/C513, C516/C536, C552/C572, C575/C595, C613/C633, C653/C673, and C689/C910. The EGF-like 1; calcium-binding domain occupies 345–384 (DIDECAELSGSCVPNSVCINTVGSFKCGQCKAGFVGNQTV). An N-linked (GlcNAc...) asparagine glycan is attached at N381. The EGF-like 2 domain occupies 388-430 (ARRTCETLGYSPCDVNSHCVMGRNSDVSCVCNVGWAGNGNICG). TSP type-3 repeat units follow at residues 431–465 (PDSDIDGYPDEPLPCMDNDKHCRADNCANTPNSGQ), 466–501 (EDTDGDGIGDQCDEDADGDGIKNVEDNCRLVPNKDQ), 502–524 (QNSDTDSYGDACDNCPNVPNGDQ), 525–560 (LDTDGNGKGDICDTDIDGDGIPNVLDNCPKIPNPMQ), 561–583 (TDRDGDGVGDACDSCPEVNDPLQ), 584–621 (SDMDNDLVGDVCDTNKDIDGDGYQDTRDNCPEVPNSSQ), 622–661 (LDSDNDGIGDECDDDDDNDGIPDILPPGPDNCRLVPNPSQ), and 662–697 (IDTDANGVGDVCETDFDNDKVTDLLDACPESAEVTM). Residues 602–613 (DGDGYQDTRDNC) show a composition bias toward basic and acidic residues. Residues 602–651 (DGDGYQDTRDNCPEVPNSSQLDSDNDGIGDECDDDDDNDGIPDILPPGPD) are disordered. N-linked (GlcNAc...) asparagine glycosylation occurs at N618. The segment covering 624-641 (SDNDGIGDECDDDDDNDG) has biased composition (acidic residues). The TSP C-terminal domain occupies 701-915 (RAFQTVILDP…LGYRCNDSIP (215 aa)). N-linked (GlcNAc...) asparagine glycosylation is present at N911.

Belongs to the thrombospondin family. In terms of assembly, oligomer; disulfide-linked.

Adhesive glycoprotein that mediates cell-to-cell and cell-to-matrix interactions. Can bind to fibrinogen, fibronectin, laminin and type V collagen. In Danio rerio (Zebrafish), this protein is Thrombospondin-3b.